Consider the following 497-residue polypeptide: Glutamyl-tRNA(Gln) amidotransferase subunit A (497 aa).

Residues K91 and S166 each act as charge relay system in the active site. The segment at 143-171 is disordered; it reads SSTENSAYGPTHNPWDLERTAGGSGGGSS. Residue S190 is the Acyl-ester intermediate of the active site.

It belongs to the amidase family. GatA subfamily. In terms of assembly, heterotrimer of A, B and C subunits.

The enzyme catalyses L-glutamyl-tRNA(Gln) + L-glutamine + ATP + H2O = L-glutaminyl-tRNA(Gln) + L-glutamate + ADP + phosphate + H(+). In terms of biological role, allows the formation of correctly charged Gln-tRNA(Gln) through the transamidation of misacylated Glu-tRNA(Gln) in organisms which lack glutaminyl-tRNA synthetase. The reaction takes place in the presence of glutamine and ATP through an activated gamma-phospho-Glu-tRNA(Gln). This chain is Glutamyl-tRNA(Gln) amidotransferase subunit A, found in Corynebacterium glutamicum (strain R).